Reading from the N-terminus, the 342-residue chain is MYTLARQLLFKLSPETSHELSIDLIGAGGRLGLNRLLAPRPASLPVSVLGLEFPNPVGLAAGLDKNGDAIDGFGQLGFGFIEIGTVTPRPQPGNPKPRLFRLPQASAIINRMGFNNHGVDHLLARVRAAKYRGVLGINIGKNFDTPVERAVDDYLTCLDKVYADASYVTVNVSSPNTPGLRSLQFGDSLKQLLEALRQRQEDLALRHGRRVPLAIKIAPDMSDEETALVAAALVEAGMDAVIATNTTLGREGVEGLPHGDEAGGLSGAPVREKSTHTVKVLAGELGGRLPIIAAGGITEGAHAAEKIAAGASLVQIYSGFIYKGPALIREAVDAIAALPRRN.

FMN-binding positions include 61 to 65 (AGLDK) and threonine 85. Lysine 65 contributes to the substrate binding site. 110–114 (NRMGF) provides a ligand contact to substrate. Positions 138 and 171 each coordinate FMN. Residue asparagine 171 coordinates substrate. Catalysis depends on serine 174, which acts as the Nucleophile. Asparagine 176 contacts substrate. FMN-binding residues include lysine 216 and threonine 244. A substrate-binding site is contributed by 245-246 (NT). FMN is bound by residues glycine 267, glycine 296, and 317 to 318 (YS).

This sequence belongs to the dihydroorotate dehydrogenase family. Type 2 subfamily. In terms of assembly, monomer. Requires FMN as cofactor.

The protein localises to the cell membrane. The enzyme catalyses (S)-dihydroorotate + a quinone = orotate + a quinol. It participates in pyrimidine metabolism; UMP biosynthesis via de novo pathway; orotate from (S)-dihydroorotate (quinone route): step 1/1. In terms of biological role, catalyzes the conversion of dihydroorotate to orotate with quinone as electron acceptor. In Pseudomonas paraeruginosa (strain DSM 24068 / PA7) (Pseudomonas aeruginosa (strain PA7)), this protein is Dihydroorotate dehydrogenase (quinone).